Reading from the N-terminus, the 269-residue chain is HTH-type transcriptional activator ArnR1 (269 aa).

Residues 1 to 217 lie on the Cytoplasmic side of the membrane; sequence MSSMNKRVFD…LLKLTGSYRY (217 aa). Residues 42–65 constitute a DNA-binding region (H-T-H motif); that stretch reads TTEISQTINTSRKSIIDAIRKLVD. A helical transmembrane segment spans residues 218 to 238; sequence EIALTKVMLFNVISIPVLMYL. At 239-241 the chain is on the extracellular side; sequence KDQ. Residues 242–262 traverse the membrane as a helical segment; sequence LGILEAIWLYVIILLPLLSIF. Topologically, residues 263 to 269 are cytoplasmic; the sequence is AEIFNRI.

Its subcellular location is the cell membrane. Functionally, involved in regulation of archaellar gene expression. May activate flaB transcription upon nutrient starvation by acting on the flaB promoter. This Sulfolobus acidocaldarius (strain ATCC 33909 / DSM 639 / JCM 8929 / NBRC 15157 / NCIMB 11770) protein is HTH-type transcriptional activator ArnR1.